The chain runs to 353 residues: Photosystem II protein D1 (353 aa).

N-acetylthreonine is present on Thr2. Position 2 is a phosphothreonine (Thr2). The next 3 membrane-spanning stretches (helical) occupy residues 29–46 (YIGWFGVLMIPTLLTATS), 118–133 (HFLLGVACYMGREWEL), and 142–156 (WIAVAYSAPVAAATA). His118 contributes to the chlorophyll a binding site. Position 126 (Tyr126) interacts with pheophytin a. The [CaMn4O5] cluster site is built by Asp170 and Glu189. A helical membrane pass occupies residues 197 to 218 (FHMLGVAGVFGGSLFSAMHGSL). Residue His198 participates in chlorophyll a binding. Residues His215 and 264-265 (SF) contribute to the a quinone site. A Fe cation-binding site is contributed by His215. His272 lines the Fe cation pocket. The helical transmembrane segment at 274–288 (FLAAWPVVGIWFTAL) threads the bilayer. His332, Glu333, Asp342, and Ala344 together coordinate [CaMn4O5] cluster. Positions 345-353 (AIEAPATNG) are excised as a propeptide.

It belongs to the reaction center PufL/M/PsbA/D family. In terms of assembly, PSII is composed of 1 copy each of membrane proteins PsbA, PsbB, PsbC, PsbD, PsbE, PsbF, PsbH, PsbI, PsbJ, PsbK, PsbL, PsbM, PsbT, PsbX, PsbY, PsbZ, Psb30/Ycf12, at least 3 peripheral proteins of the oxygen-evolving complex and a large number of cofactors. It forms dimeric complexes. It depends on The D1/D2 heterodimer binds P680, chlorophylls that are the primary electron donor of PSII, and subsequent electron acceptors. It shares a non-heme iron and each subunit binds pheophytin, quinone, additional chlorophylls, carotenoids and lipids. D1 provides most of the ligands for the Mn4-Ca-O5 cluster of the oxygen-evolving complex (OEC). There is also a Cl(-1) ion associated with D1 and D2, which is required for oxygen evolution. The PSII complex binds additional chlorophylls, carotenoids and specific lipids. as a cofactor. Tyr-161 forms a radical intermediate that is referred to as redox-active TyrZ, YZ or Y-Z. In terms of processing, C-terminally processed by CTPA; processing is essential to allow assembly of the oxygen-evolving complex and thus photosynthetic growth.

The protein localises to the plastid membrane. The catalysed reaction is 2 a plastoquinone + 4 hnu + 2 H2O = 2 a plastoquinol + O2. In terms of biological role, photosystem II (PSII) is a light-driven water:plastoquinone oxidoreductase that uses light energy to abstract electrons from H(2)O, generating O(2) and a proton gradient subsequently used for ATP formation. It consists of a core antenna complex that captures photons, and an electron transfer chain that converts photonic excitation into a charge separation. The D1/D2 (PsbA/PsbD) reaction center heterodimer binds P680, the primary electron donor of PSII as well as several subsequent electron acceptors. In Cuscuta reflexa (Southern Asian dodder), this protein is Photosystem II protein D1.